We begin with the raw amino-acid sequence, 910 residues long: Translation factor GUF1 homolog, mitochondrial (910 aa).

A disordered region spans residues 126 to 188; it reads RRGNGLPFER…DGGGAPEHPQ (63 aa). The tr-type G domain occupies 189 to 366; it reads QNVRNFCILA…RIVSDIPCPA (178 aa). GTP-binding positions include 198–205, 259–263, and 313–316; these read AHIDSGKS, DTPGH, and NKID. Residues 639–683 form a disordered region; the sequence is GSGDGRADGSADGSADGSADGSGDSSAHGSSDRRGAGCARGSDDI. Positions 646–667 are enriched in low complexity; sequence DGSADGSADGSADGSGDSSAHG.

Belongs to the TRAFAC class translation factor GTPase superfamily. Classic translation factor GTPase family. LepA subfamily.

It is found in the mitochondrion inner membrane. The enzyme catalyses GTP + H2O = GDP + phosphate + H(+). In terms of biological role, promotes mitochondrial protein synthesis. May act as a fidelity factor of the translation reaction, by catalyzing a one-codon backward translocation of tRNAs on improperly translocated ribosomes. Binds to mitochondrial ribosomes in a GTP-dependent manner. This chain is Translation factor GUF1 homolog, mitochondrial, found in Plasmodium vivax (strain Salvador I).